Here is a 170-residue protein sequence, read N- to C-terminus: Adenine phosphoribosyltransferase (170 aa).

This sequence belongs to the purine/pyrimidine phosphoribosyltransferase family. Homodimer.

The protein localises to the cytoplasm. It catalyses the reaction AMP + diphosphate = 5-phospho-alpha-D-ribose 1-diphosphate + adenine. It functions in the pathway purine metabolism; AMP biosynthesis via salvage pathway; AMP from adenine: step 1/1. Functionally, catalyzes a salvage reaction resulting in the formation of AMP, that is energically less costly than de novo synthesis. In Thermosipho africanus (strain TCF52B), this protein is Adenine phosphoribosyltransferase.